We begin with the raw amino-acid sequence, 332 residues long: MTSCNYQPSEWPGDESWARLNNNQYDKVGFLEGVYDEYTKNKEPVELKFAGVYSLGSPNNFFRVTPSPVPVPTPMSVPRNVPRNVPTPAAPTPVTLTYRVPVTHSVPVTTEVPVTHTIATQPVMQTVPVMTQTVPVVTVHDSSPVAHVQVPNVIEGFEPLEISGRGGNTRPNFGYDTRPTTRPTRPDFGSDIGFGTRPHPRPPSPRPPSPRPPHPRPPSPRPPHPRPPSPRPRPRPQPDRNWWSNRPRPHPWGPGPVIRRSWPNVYGFPIWFNQPMNSFPLGWDIITAREIYPNIRVVKADGIDVATTMDYQPERLNVETVNNIIIRSYGFY.

The disordered stretch occupies residues 159–256 (PLEISGRGGN…PRPHPWGPGP (98 aa)). The span at 201 to 231 (RPPSPRPPSPRPPHPRPPSPRPPHPRPPSPR) shows a compositional bias: pro residues.

Its subcellular location is the virion. This is an uncharacterized protein from Acanthamoeba polyphaga (Amoeba).